The primary structure comprises 303 residues: 2-dehydropantoate 2-reductase (303 aa).

Residues 7–12 (GCGALG), Asn-98, and Ala-122 contribute to the NADP(+) site. Asn-98 is a substrate binding site. The active-site Proton donor is the Lys-176. 4 residues coordinate substrate: Asn-180, Asn-184, Asn-194, and Ser-244. Glu-256 contributes to the NADP(+) binding site.

Belongs to the ketopantoate reductase family.

The protein localises to the cytoplasm. It catalyses the reaction (R)-pantoate + NADP(+) = 2-dehydropantoate + NADPH + H(+). It functions in the pathway cofactor biosynthesis; (R)-pantothenate biosynthesis; (R)-pantoate from 3-methyl-2-oxobutanoate: step 2/2. Catalyzes the NADPH-dependent reduction of ketopantoate into pantoic acid. This is 2-dehydropantoate 2-reductase (panE) from Yersinia pestis.